Reading from the N-terminus, the 25-residue chain is U11-ctenitoxin-Co1b (25 aa).

Intrachain disulfides connect Cys-4/Cys-18 and Cys-11/Cys-22.

As to quaternary structure, monomer. In terms of tissue distribution, expressed by the venom gland.

The protein localises to the secreted. Neurotoxin. The polypeptide is U11-ctenitoxin-Co1b (Ctenus ornatus (Brazilian spider)).